The sequence spans 328 residues: Malate dehydrogenase (328 aa).

12–18 (GAAGQIG) provides a ligand contact to NAD(+). Substrate is bound by residues Arg-92 and Arg-98. NAD(+) contacts are provided by residues Asn-105, Gln-112, and 129–131 (TGN). Substrate contacts are provided by Asn-131 and Arg-162. The active-site Proton acceptor is the His-187.

This sequence belongs to the LDH/MDH superfamily. MDH type 2 family.

The catalysed reaction is (S)-malate + NAD(+) = oxaloacetate + NADH + H(+). Functionally, catalyzes the reversible oxidation of malate to oxaloacetate. This chain is Malate dehydrogenase, found in Nocardioides sp. (strain ATCC BAA-499 / JS614).